Here is a 513-residue protein sequence, read N- to C-terminus: Ankyrin repeat domain-containing protein 13C-B (513 aa).

Residues 1–19 (MTGEKIRSLHRDQKPSKDE) are compositionally biased toward basic and acidic residues. 2 disordered regions span residues 1–34 (MTGE…DGTF) and 55–77 (PSNP…PMTP). The span at 20-29 (DLLEPDEEAT) shows a compositional bias: acidic residues. ANK repeat units lie at residues 83 to 114 (DVYF…QKDN), 115 to 144 (HGNT…PVKV), and 148 to 177 (QGWS…QQSR).

The protein resides in the endoplasmic reticulum membrane. Functionally, acts as a molecular chaperone for G protein-coupled receptors, regulating their biogenesis and exit from the ER. The polypeptide is Ankyrin repeat domain-containing protein 13C-B (ankrd13c-b) (Xenopus laevis (African clawed frog)).